We begin with the raw amino-acid sequence, 72 residues long: Translation initiation factor IF-1 (72 aa).

Positions 1–72 (MAKQSAIEQD…SKGRIVFRYK (72 aa)) constitute an S1-like domain.

The protein belongs to the IF-1 family. In terms of assembly, component of the 30S ribosomal translation pre-initiation complex which assembles on the 30S ribosome in the order IF-2 and IF-3, IF-1 and N-formylmethionyl-tRNA(fMet); mRNA recruitment can occur at any time during PIC assembly.

The protein resides in the cytoplasm. In terms of biological role, one of the essential components for the initiation of protein synthesis. Stabilizes the binding of IF-2 and IF-3 on the 30S subunit to which N-formylmethionyl-tRNA(fMet) subsequently binds. Helps modulate mRNA selection, yielding the 30S pre-initiation complex (PIC). Upon addition of the 50S ribosomal subunit IF-1, IF-2 and IF-3 are released leaving the mature 70S translation initiation complex. The chain is Translation initiation factor IF-1 from Bacteroides fragilis (strain ATCC 25285 / DSM 2151 / CCUG 4856 / JCM 11019 / LMG 10263 / NCTC 9343 / Onslow / VPI 2553 / EN-2).